Here is a 379-residue protein sequence, read N- to C-terminus: Flagellin A (379 aa).

Coiled coils occupy residues 103–128 (TNSASERQALDEESTALQDELNRIAE) and 302–341 (YVDSQRAELGAKQNRLSHSINNLANIQENVEASNSRIKDT).

Belongs to the bacterial flagellin family. As to quaternary structure, heteromer of multiple flagellin subunits including FlaA, FlaB, FlaC, FlaD and possibly FlaE.

Its subcellular location is the secreted. It is found in the bacterial flagellum. Flagellin is the subunit protein which polymerizes to form the filaments of bacterial flagella. FlaA is essential for flagellar synthesis and full motility. Important for virulence at two different levels: is needed for crossing the fish integument and may play a role once the bacterium has entered the host. The polypeptide is Flagellin A (flaA) (Vibrio anguillarum (Listonella anguillarum)).